The chain runs to 421 residues: ATP-dependent RNA helicase RhlB (421 aa).

A Q motif motif is present at residues 9 to 37; that stretch reads QKFSDFALHPAVIEALEKKGFHNCTPIQA. One can recognise a Helicase ATP-binding domain in the interval 40-219; sequence LPLTLEGRDV…FEQMNNAEYV (180 aa). 53–60 is a binding site for ATP; it reads AQTGTGKT. The DEAD box signature appears at 165-168; sequence DEAD. The 146-residue stretch at 245 to 390 folds into the Helicase C-terminal domain; that stretch reads RLLQTLLEEE…VSKYNPDALM (146 aa). The segment at 396–421 is disordered; sequence PLRLTRARPGNGPRRNGPPRNRRRSG. The segment covering 403–414 has biased composition (low complexity); the sequence is RPGNGPRRNGPP.

Belongs to the DEAD box helicase family. RhlB subfamily. As to quaternary structure, component of the RNA degradosome, which is a multiprotein complex involved in RNA processing and mRNA degradation.

The protein localises to the cytoplasm. It catalyses the reaction ATP + H2O = ADP + phosphate + H(+). Functionally, DEAD-box RNA helicase involved in RNA degradation. Has RNA-dependent ATPase activity and unwinds double-stranded RNA. This Klebsiella pneumoniae (strain 342) protein is ATP-dependent RNA helicase RhlB.